Consider the following 487-residue polypeptide: Cysteine--tRNA ligase (487 aa).

Residue Cys27 participates in Zn(2+) binding. Positions 29-39 (ATVQGLPHVGH) match the 'HIGH' region motif. The interval 174 to 194 (IDDMQGAPDADPRGKKDPRDF) is disordered. Over residues 183 to 194 (ADPRGKKDPRDF) the composition is skewed to basic and acidic residues. Residues Cys225, His250, and Glu254 each contribute to the Zn(2+) site. The 'KMSKS' region motif lies at 281-285 (KMSKS). An ATP-binding site is contributed by Lys284.

It belongs to the class-I aminoacyl-tRNA synthetase family. In terms of assembly, monomer. Requires Zn(2+) as cofactor.

The protein localises to the cytoplasm. It carries out the reaction tRNA(Cys) + L-cysteine + ATP = L-cysteinyl-tRNA(Cys) + AMP + diphosphate. In Arthrobacter sp. (strain FB24), this protein is Cysteine--tRNA ligase.